The following is a 348-amino-acid chain: L-threonine 3-dehydrogenase (348 aa).

Residue cysteine 42 participates in Zn(2+) binding. Residues threonine 44 and histidine 47 each act as charge relay system in the active site. Histidine 67, glutamate 68, cysteine 97, cysteine 100, cysteine 103, and cysteine 111 together coordinate Zn(2+). NAD(+) contacts are provided by residues leucine 179, glutamate 199, arginine 204, 266 to 268 (LGL), and 291 to 292 (IT).

This sequence belongs to the zinc-containing alcohol dehydrogenase family. Homotetramer. The cofactor is Zn(2+).

The protein resides in the cytoplasm. It carries out the reaction L-threonine + NAD(+) = (2S)-2-amino-3-oxobutanoate + NADH + H(+). The protein operates within amino-acid degradation; L-threonine degradation via oxydo-reductase pathway; glycine from L-threonine: step 1/2. Catalyzes the NAD(+)-dependent oxidation of L-threonine to 2-amino-3-ketobutyrate. The sequence is that of L-threonine 3-dehydrogenase from Pyrococcus abyssi (strain GE5 / Orsay).